The chain runs to 389 residues: tRNA (guanine-N(7)-)-methyltransferase non-catalytic subunit TRM82 (389 aa).

3 WD repeats span residues 44-86, 134-179, and 184-222; these read QNVP…HQLK, GHTS…KGFL, and QFVS…LITE.

This sequence belongs to the WD repeat TRM82 family. In terms of assembly, forms a heterodimer with the catalytic subunit TRM8.

It is found in the nucleus. The protein operates within tRNA modification; N(7)-methylguanine-tRNA biosynthesis. Its function is as follows. Required for the formation of N(7)-methylguanine at position 46 (m7G46) in tRNA. In the complex, it is required to stabilize and induce conformational changes of the catalytic subunit. The protein is tRNA (guanine-N(7)-)-methyltransferase non-catalytic subunit TRM82 of Lodderomyces elongisporus (strain ATCC 11503 / CBS 2605 / JCM 1781 / NBRC 1676 / NRRL YB-4239) (Yeast).